Consider the following 224-residue polypeptide: Deoxyribose-phosphate aldolase (224 aa).

Asp-94 acts as the Proton donor/acceptor in catalysis. Lys-156 acts as the Schiff-base intermediate with acetaldehyde in catalysis. Lys-184 acts as the Proton donor/acceptor in catalysis.

Belongs to the DeoC/FbaB aldolase family. DeoC type 1 subfamily.

The protein resides in the cytoplasm. It catalyses the reaction 2-deoxy-D-ribose 5-phosphate = D-glyceraldehyde 3-phosphate + acetaldehyde. It functions in the pathway carbohydrate degradation; 2-deoxy-D-ribose 1-phosphate degradation; D-glyceraldehyde 3-phosphate and acetaldehyde from 2-deoxy-alpha-D-ribose 1-phosphate: step 2/2. In terms of biological role, catalyzes a reversible aldol reaction between acetaldehyde and D-glyceraldehyde 3-phosphate to generate 2-deoxy-D-ribose 5-phosphate. In Methanocella arvoryzae (strain DSM 22066 / NBRC 105507 / MRE50), this protein is Deoxyribose-phosphate aldolase.